A 553-amino-acid chain; its full sequence is Chaperonin GroEL 1 (553 aa).

ATP-binding positions include 29–32, 86–90, G413, 476–478, and D492; these read TIGP, DGTTT, and NAL. The tract at residues 520–543 is disordered; it reads DKPEPPAPAGGGGDPMGGMGGMDP. Over residues 528–543 the composition is skewed to gly residues; that stretch reads AGGGGDPMGGMGGMDP.

The protein belongs to the chaperonin (HSP60) family. Forms a cylinder of 14 subunits composed of two heptameric rings stacked back-to-back. Interacts with the co-chaperonin GroES.

The protein resides in the cytoplasm. It carries out the reaction ATP + H2O + a folded polypeptide = ADP + phosphate + an unfolded polypeptide.. Functionally, together with its co-chaperonin GroES, plays an essential role in assisting protein folding. The GroEL-GroES system forms a nano-cage that allows encapsulation of the non-native substrate proteins and provides a physical environment optimized to promote and accelerate protein folding. The polypeptide is Chaperonin GroEL 1 (Synechococcus sp. (strain CC9311)).